We begin with the raw amino-acid sequence, 202 residues long: ATP-dependent dethiobiotin synthetase BioD (202 aa).

12–17 (GIGKTI) contributes to the ATP binding site. T16 provides a ligand contact to Mg(2+). K32 is a catalytic residue. S36 provides a ligand contact to substrate. ATP-binding positions include D43, 94–97 (EGAG), and 178–180 (PVV). The Mg(2+) site is built by D43 and E94.

It belongs to the dethiobiotin synthetase family. In terms of assembly, homodimer. Mg(2+) is required as a cofactor.

It is found in the cytoplasm. It catalyses the reaction (7R,8S)-7,8-diammoniononanoate + CO2 + ATP = (4R,5S)-dethiobiotin + ADP + phosphate + 3 H(+). It participates in cofactor biosynthesis; biotin biosynthesis; biotin from 7,8-diaminononanoate: step 1/2. In terms of biological role, catalyzes a mechanistically unusual reaction, the ATP-dependent insertion of CO2 between the N7 and N8 nitrogen atoms of 7,8-diaminopelargonic acid (DAPA, also called 7,8-diammoniononanoate) to form a ureido ring. This is ATP-dependent dethiobiotin synthetase BioD from Sphingopyxis alaskensis (strain DSM 13593 / LMG 18877 / RB2256) (Sphingomonas alaskensis).